The following is a 421-amino-acid chain: E3 ubiquitin-protein ligase RMD5 (421 aa).

Positions 176-236 (EFIEMGQIVH…QIVKHGNPVE (61 aa)) constitute a CTLH domain. An RING-Gid-type zinc finger spans residues 361-404 (CPVLKEETTTENPPYSLACHHIISKKALDRLSKNGTITFKCPYC).

Belongs to the RMD5/GID2 family. As to quaternary structure, identified in the GID/CTLH complex. In the absence of stress, the complex exists as an inactive anticipatory complex (GID(Ant)), composed of VID30/GID1, the E3 ubiquitin-ligase RMD5/GID2, VID28/GID5, GID8, and the RING-like subunit FYV10/GID9, awaiting a substrate receptor to form the active E3 ligase complex. When cells are shifted to glucose-containing medium, the substrate receptor VID24/GID4 is induced and becomes part of the complex, named GID(SR4). Additionally, GID7 transforms the GID(SR4) E3 ligase core into a higher-order supramolecular assembly (Chelator-GID(SR4)) specifically tailored for FBP1 ubiquitination. Under osmotic or heat stress, the substrate receptor GID10 is induced and becomes part of the complex, named GID(SR10). Within the GID complex, interacts directly with GID8, FYV10/GID9 and VID28/GID5.

Its subcellular location is the cytoplasm. The enzyme catalyses S-ubiquitinyl-[E2 ubiquitin-conjugating enzyme]-L-cysteine + [acceptor protein]-L-lysine = [E2 ubiquitin-conjugating enzyme]-L-cysteine + N(6)-ubiquitinyl-[acceptor protein]-L-lysine.. The protein operates within protein modification; protein ubiquitination. E3 ubiquitin-protein ligase component of the GID E3 ligase complex recruiting N termini and catalyzing ubiquitination of proteins targeted for degradation. GID E3 is regulated through assembly with interchangeable N-degron-binding substrate receptors induced by distinct environmental perturbations. Required for the adaptation to the presence of glucose in the growth medium; mediates in association with the substrate receptor VID24/GID4 the degradation of enzymes involved in gluconeogenesis when cells are shifted to glucose-containing medium. Required for proteasome-dependent catabolite degradation of fructose-1,6-bisphosphatase (FBP1), malate dehydrogenase (MDH2), and other gluconeogenic enzymes. In Saccharomyces cerevisiae (strain ATCC 204508 / S288c) (Baker's yeast), this protein is E3 ubiquitin-protein ligase RMD5.